We begin with the raw amino-acid sequence, 288 residues long: Thymidylate synthase (288 aa).

A dUMP-binding site is contributed by Arg-21. Asn-51 provides a ligand contact to (6R)-5,10-methylene-5,6,7,8-tetrahydrofolate. A dUMP-binding site is contributed by 150–151; it reads RR. Residue Cys-170 is the Nucleophile of the active site. DUMP-binding positions include 190–193, Asn-201, and 231–233; these read RSGD and HIY. Position 193 (Asp-193) interacts with (6R)-5,10-methylene-5,6,7,8-tetrahydrofolate. Position 287 (Ala-287) interacts with (6R)-5,10-methylene-5,6,7,8-tetrahydrofolate.

Belongs to the thymidylate synthase family. Bacterial-type ThyA subfamily. In terms of assembly, homodimer.

The protein localises to the cytoplasm. The catalysed reaction is dUMP + (6R)-5,10-methylene-5,6,7,8-tetrahydrofolate = 7,8-dihydrofolate + dTMP. The protein operates within pyrimidine metabolism; dTTP biosynthesis. Its function is as follows. Catalyzes the reductive methylation of 2'-deoxyuridine-5'-monophosphate (dUMP) to 2'-deoxythymidine-5'-monophosphate (dTMP) while utilizing 5,10-methylenetetrahydrofolate (mTHF) as the methyl donor and reductant in the reaction, yielding dihydrofolate (DHF) as a by-product. This enzymatic reaction provides an intracellular de novo source of dTMP, an essential precursor for DNA biosynthesis. The sequence is that of Thymidylate synthase from Phytoplasma mali (strain AT).